Consider the following 857-residue polypeptide: A-kinase anchor protein 1, mitochondrial (857 aa).

The transit peptide at 1-29 (MAIQLRSLFPLALPGMLALLGWWWFFSRK) directs the protein to the mitochondrion. Serine 55 carries the phosphoserine modification. Positions 65–121 (VAPTVTQPPGREEQRCVDKPSTEPLALPRTRQVRRRSESSGNLPSVADTRSQPGPCR) are disordered. Over residues 74–85 (GREEQRCVDKPS) the composition is skewed to basic and acidic residues. A phosphoserine mark is found at serine 101, serine 103, and serine 164. Residues 103–116 (SSGNLPSVADTRSQ) are compositionally biased toward polar residues. Disordered stretches follow at residues 165–198 (ALGK…GDAV) and 260–303 (FVEP…VPEN). Basic and acidic residues predominate over residues 286-299 (SDRDLAGELDKDET). Positions 306–319 (IKQAAFQLISQVIL) are PKA-RII subunit binding domain. 3 disordered regions span residues 336–437 (QVHP…NPRG), 466–497 (STSG…TQPF), and 512–554 (EDGW…QAGS). Over residues 354–379 (PASQETSLGQDTSDPASTRTGATASP) the composition is skewed to polar residues. Threonine 401 carries the phosphothreonine modification. Polar residues predominate over residues 466–482 (STSGLEDSCTETISSSG). A Phosphothreonine modification is found at threonine 487. A phosphoserine mark is found at serine 527 and serine 546. Residues 545 to 554 (DSPQSVQAGS) are compositionally biased toward polar residues. A KH domain is found at 561–625 (LIIWEIEVPK…HHVDKALNLI (65 aa)). One can recognise a Tudor domain in the interval 712-771 (PVEITVICAAPGADGAWWRAQVVASYEETNEVEIRYVDYGGYKRVKVDVLRQIRSDFVTL).

Interacts with SLC8A3. Interacts with CFAP91. Interacts with CLPB. Interacts with NDUFS1. In terms of tissue distribution, highest expression in testis, heart, liver, skeletal muscle, intestine and kidney, followed by brain and lung. No expression in spleen. Isoform 1/D-AKAP1A is expressed predominantly in testis whereas isoform 4/D-AKAP1D is expressed primarily in liver. Expression is decreased in hearts of diabetic mice (at protein level).

It is found in the mitochondrion outer membrane. It localises to the mitochondrion. The protein localises to the endoplasmic reticulum. Its function is as follows. Differentially targeted protein that binds to type I and II regulatory subunits of protein kinase A. Anchors them to the cytoplasmic face of the mitochondrial outer membrane or allows them to reside in the endoplasmic reticulum. Involved in mitochondrial-mediated antiviral innate immunity. Promotes translocation of NDUFS1 into mitochondria to regulate mitochondrial membrane respiratory chain NADH dehydrogenase (Complex I) activity. Under diabetic conditions, myocardial AKAP1 expression decreases which blocks the translocation of NDUFS1 from the cytosol to mitochondria. Reduction of NDUFS1 in mitochondria decreases ATP production and increases mitochondrial ROS level, which causes mitochondrial dysfunction and cell apoptosis, respectively, thereby leading to cardiac dysfunction. This chain is A-kinase anchor protein 1, mitochondrial, found in Mus musculus (Mouse).